The sequence spans 238 residues: Ribitol-5-phosphate cytidylyltransferase 2 (238 aa).

CTP contacts are provided by residues 7-10 and 81-87; these read LAGG and GTDRNET.

This sequence belongs to the IspD/TarI cytidylyltransferase family. TarI subfamily. Heterodimer together with TarJ.

It catalyses the reaction D-ribitol 5-phosphate + CTP + H(+) = CDP-L-ribitol + diphosphate. The protein operates within cell wall biogenesis; poly(ribitol phosphate) teichoic acid biosynthesis. Functionally, catalyzes the transfer of the cytidylyl group of CTP to D-ribitol 5-phosphate. The protein is Ribitol-5-phosphate cytidylyltransferase 2 of Staphylococcus aureus (strain NCTC 8325 / PS 47).